Consider the following 316-residue polypeptide: tRNA-cytidine(32) 2-sulfurtransferase (316 aa).

The short motif at 45–50 (SGGKDS) is the PP-loop motif element. [4Fe-4S] cluster-binding residues include C120, C123, and C211.

The protein belongs to the TtcA family. Homodimer. Mg(2+) serves as cofactor. It depends on [4Fe-4S] cluster as a cofactor.

The protein resides in the cytoplasm. It carries out the reaction cytidine(32) in tRNA + S-sulfanyl-L-cysteinyl-[cysteine desulfurase] + AH2 + ATP = 2-thiocytidine(32) in tRNA + L-cysteinyl-[cysteine desulfurase] + A + AMP + diphosphate + H(+). It functions in the pathway tRNA modification. Its function is as follows. Catalyzes the ATP-dependent 2-thiolation of cytidine in position 32 of tRNA, to form 2-thiocytidine (s(2)C32). The sulfur atoms are provided by the cysteine/cysteine desulfurase (IscS) system. The sequence is that of tRNA-cytidine(32) 2-sulfurtransferase from Shewanella sediminis (strain HAW-EB3).